Reading from the N-terminus, the 474-residue chain is A-type ATP synthase subunit B (474 aa).

It belongs to the ATPase alpha/beta chains family. Has multiple subunits with at least A(3), B(3), C, D, E, F, H, I and proteolipid K(x).

Its subcellular location is the cell membrane. In terms of biological role, component of the A-type ATP synthase that produces ATP from ADP in the presence of a proton gradient across the membrane. The B chain is a regulatory subunit. The protein is A-type ATP synthase subunit B of Halorubrum lacusprofundi (strain ATCC 49239 / DSM 5036 / JCM 8891 / ACAM 34).